The chain runs to 388 residues: LL-diaminopimelate aminotransferase (388 aa).

5 residues coordinate substrate: Tyr-13, Gly-38, Lys-102, Tyr-126, and Asn-176. Pyridoxal 5'-phosphate is bound by residues 101 to 102, Tyr-126, Asn-176, Tyr-207, and 235 to 237; these read SK and SLS. An N6-(pyridoxal phosphate)lysine modification is found at Lys-238. Arg-246 serves as a coordination point for pyridoxal 5'-phosphate. Residue Arg-364 participates in substrate binding.

It belongs to the class-I pyridoxal-phosphate-dependent aminotransferase family. LL-diaminopimelate aminotransferase subfamily. In terms of assembly, homodimer. It depends on pyridoxal 5'-phosphate as a cofactor.

It carries out the reaction (2S,6S)-2,6-diaminopimelate + 2-oxoglutarate = (S)-2,3,4,5-tetrahydrodipicolinate + L-glutamate + H2O + H(+). The protein operates within amino-acid biosynthesis; L-lysine biosynthesis via DAP pathway; LL-2,6-diaminopimelate from (S)-tetrahydrodipicolinate (aminotransferase route): step 1/1. Functionally, involved in the synthesis of meso-diaminopimelate (m-DAP or DL-DAP), required for both lysine and peptidoglycan biosynthesis. Catalyzes the direct conversion of tetrahydrodipicolinate to LL-diaminopimelate. This Dehalococcoides mccartyi (strain CBDB1) protein is LL-diaminopimelate aminotransferase.